The following is a 268-amino-acid chain: MNTTTEQDFGADPTKVRDTDHYTEEYVDGFVDKWDDLIDWDSRAKSEGDFFIQELKKRGATRILDAATGTGFHSVRLLEAGFDVVSADGSAEMLAKAFENGRKRGHILRTVQVDWRWLNRDIHGRYDAIICLGNSFTHLFNEKDRRKTLAEFYSALNPEGVLILDQRNYDGILDHGYDSSHSYYYCGEGVSVYPEHVDDGLARFKYEFNDGSTYFLNMFPLRKDYTRRLMHEVGFQKIDTYGDFKATYRDADPDFFIHVAEKEYREED.

Residues Y26, W34, R43, A67, D88, 114–115 (DW), and L132 each bind S-adenosyl-L-methionine. Residues N134, R167, and Y206 each contribute to the substrate site.

Belongs to the class I-like SAM-binding methyltransferase superfamily. Glycine N-methyltransferase family. Monomer.

The catalysed reaction is glycine + 2 S-adenosyl-L-methionine = N,N-dimethylglycine + 2 S-adenosyl-L-homocysteine + 2 H(+). The enzyme catalyses glycine + S-adenosyl-L-methionine = sarcosine + S-adenosyl-L-homocysteine + H(+). It carries out the reaction sarcosine + S-adenosyl-L-methionine = N,N-dimethylglycine + S-adenosyl-L-homocysteine + H(+). It participates in amine and polyamine biosynthesis; betaine biosynthesis via glycine pathway; betaine from glycine: step 1/3. It functions in the pathway amine and polyamine biosynthesis; betaine biosynthesis via glycine pathway; betaine from glycine: step 2/3. Its activity is regulated as follows. p-chloromercuribenzoic acid inhibits more than 95% of the GSMT activities on glycine and sarcosine, and S-adenosylhomocysteine (AdoHcy) inhibits completely GSMT activities. Functionally, catalyzes the methylation of glycine and sarcosine to sarcosine and dimethylglycine, respectively, with S-adenosylmethionine (AdoMet) acting as the methyl donor. It has strict specificity for glycine and sarcosine as the methyl group acceptors. The sequence is that of Glycine/sarcosine N-methyltransferase from Halorhodospira halochloris (Ectothiorhodospira halochloris).